A 273-amino-acid chain; its full sequence is MDITGNAFVVGGGGGIGKACALAFATEGATVVAVADLDAKKAVEVAAECQALAPSAEFRAIGVQIDITQEDSVRSATEQVVQLLGRIDYCVNCAGIGVQQGADIATLPLAEFRRFLDVNTIGMFLVTREVSAAMRAQEPRLVSSESPRRGTTRGAIVNLASVLSVVAAPGIIPYTASKHAVLGLTKNAALDNVSHGIRVNCVCPSWVDTPMVQQAEEGVQGLTQFIKSVVPMGRIAVPEEIADAVIFLASPRSSYVTGSGFIVDGGTTLTAMS.

NADP(+) contacts are provided by isoleucine 16, aspartate 66, arginine 128, tyrosine 174, lysine 178, valine 207, and threonine 209. Tyrosine 174 functions as the Proton donor in the catalytic mechanism. Lysine 178 acts as the Lowers pKa of active site Tyr in catalysis.

The protein belongs to the short-chain dehydrogenases/reductases (SDR) family.

Its function is as follows. Short-chain dehydrogenase; part of the gene cluster that mediates the biosynthesis of flavoglaucin and congeners (including aspergin, dihydroauroglaucin and auroglaucin), prenylated salicylaldehyde derivatives carrying a saturated or an unsaturated C-7 side chain. The PKS fogA releases the carboxylic acid (8E,10E,12E)-3,5,7-trihydroxytetradeca-8,10,12-trienoic acid as its product, as well as derivatives with one and two double bonds. FogA is indeed able to reduce the initial triketide, thus being at least partially responsible for the differently saturated heptyl side chains of flavoglaucin congeners. The oxidoreductases fogB, fogC and fogD modify the nascent polyketide in fogA-bound form and, together, fogA, fogB, fogC and fogD are necessary for the formation of the aromatic core and the cyclized PKS products are released as salicyl alcohols. In particular, fogB is responsible for oxidation of a hydroxyl group or reduction of remaining double bond(s) at the C-7 residue whereas fogD is probably involved in the reductive release of the modified PKS products. The cytochrome P450 monooxygenase fogE is then responsible for the hydroxylation at C-3 of the benzene ring. The fogE products are substrates of the prenyltransferase fogH and the prenylated benzyl alcohols are subsequently oxidized by the fogF to produce the final aryl aldehydes flavoglaucin and congeners. The short-chain dehydrogenase fogG does not seem to be involved in the biosynthesis of the prenylated salicylaldehyde derivatives. This chain is Short-chain dehydrogenase fogB, found in Aspergillus ruber (strain CBS 135680).